Consider the following 180-residue polypeptide: Ribosome maturation factor RimM (180 aa).

The PRC barrel domain maps to 99 to 179 (NNEYYWKDIV…IVIKNWKQTF (81 aa)).

Belongs to the RimM family. Binds ribosomal protein uS19.

Its subcellular location is the cytoplasm. An accessory protein needed during the final step in the assembly of 30S ribosomal subunit, possibly for assembly of the head region. Essential for efficient processing of 16S rRNA. May be needed both before and after RbfA during the maturation of 16S rRNA. It has affinity for free ribosomal 30S subunits but not for 70S ribosomes. The sequence is that of Ribosome maturation factor RimM from Buchnera aphidicola subsp. Baizongia pistaciae (strain Bp).